The sequence spans 109 residues: Flagellar hook-basal body complex protein FliE (109 aa).

A disordered region spans residues 1-38 (MQAIHNDKSLLSPFSELNTDNRTQREESGSTFKEQKGG). A compositionally biased stretch (basic and acidic residues) spans 22–38 (RTQREESGSTFKEQKGG).

It belongs to the FliE family.

It localises to the bacterial flagellum basal body. The polypeptide is Flagellar hook-basal body complex protein FliE (Helicobacter acinonychis (strain Sheeba)).